A 352-amino-acid chain; its full sequence is Phenylalanine--tRNA ligase alpha subunit (352 aa).

Glutamate 258 serves as a coordination point for Mg(2+).

This sequence belongs to the class-II aminoacyl-tRNA synthetase family. Phe-tRNA synthetase alpha subunit type 1 subfamily. As to quaternary structure, tetramer of two alpha and two beta subunits. Requires Mg(2+) as cofactor.

It is found in the cytoplasm. It carries out the reaction tRNA(Phe) + L-phenylalanine + ATP = L-phenylalanyl-tRNA(Phe) + AMP + diphosphate + H(+). The polypeptide is Phenylalanine--tRNA ligase alpha subunit (Staphylococcus aureus (strain bovine RF122 / ET3-1)).